The primary structure comprises 234 residues: UPF0309 protein lmo0025 (234 aa).

One can recognise an SIS domain in the interval 31-205; sequence VADSIMNDGI…ELMLEKGYTP (175 aa).

It belongs to the UPF0309 family.

This is UPF0309 protein lmo0025 from Listeria monocytogenes serovar 1/2a (strain ATCC BAA-679 / EGD-e).